A 154-amino-acid polypeptide reads, in one-letter code: Low molecular weight protein-tyrosine-phosphatase PtpA (154 aa).

Residue Cys8 is the Nucleophile of the active site. The active site involves Arg14. The active-site Proton donor is Asp120.

This sequence belongs to the low molecular weight phosphotyrosine protein phosphatase family.

It catalyses the reaction O-phospho-L-tyrosyl-[protein] + H2O = L-tyrosyl-[protein] + phosphate. Its function is as follows. Dephosphorylates the phosphotyrosine-containing proteins. This is Low molecular weight protein-tyrosine-phosphatase PtpA (ptpA) from Staphylococcus saprophyticus subsp. saprophyticus (strain ATCC 15305 / DSM 20229 / NCIMB 8711 / NCTC 7292 / S-41).